The chain runs to 152 residues: Transcriptional regulator MraZ (152 aa).

2 consecutive SpoVT-AbrB domains span residues 5 to 52 (ASAI…PLHE) and 81 to 124 (AQDC…EESA).

The protein belongs to the MraZ family. In terms of assembly, forms oligomers.

Its subcellular location is the cytoplasm. The protein resides in the nucleoid. The protein is Transcriptional regulator MraZ of Shewanella frigidimarina (strain NCIMB 400).